Here is a 328-residue protein sequence, read N- to C-terminus: Ribosomal RNA small subunit methyltransferase H (328 aa).

Residues 37 to 39, Asp-57, Phe-83, Asp-104, and Gln-111 each bind S-adenosyl-L-methionine; that span reads GGH.

This sequence belongs to the methyltransferase superfamily. RsmH family.

Its subcellular location is the cytoplasm. It catalyses the reaction cytidine(1402) in 16S rRNA + S-adenosyl-L-methionine = N(4)-methylcytidine(1402) in 16S rRNA + S-adenosyl-L-homocysteine + H(+). Functionally, specifically methylates the N4 position of cytidine in position 1402 (C1402) of 16S rRNA. The chain is Ribosomal RNA small subunit methyltransferase H from Neisseria meningitidis serogroup A / serotype 4A (strain DSM 15465 / Z2491).